A 550-amino-acid polypeptide reads, in one-letter code: Glucose-6-phosphate isomerase (550 aa).

Glu-356 functions as the Proton donor in the catalytic mechanism. Residues His-387 and Lys-515 contribute to the active site.

This sequence belongs to the GPI family.

The protein resides in the cytoplasm. It carries out the reaction alpha-D-glucose 6-phosphate = beta-D-fructose 6-phosphate. It functions in the pathway carbohydrate biosynthesis; gluconeogenesis. It participates in carbohydrate degradation; glycolysis; D-glyceraldehyde 3-phosphate and glycerone phosphate from D-glucose: step 2/4. In terms of biological role, catalyzes the reversible isomerization of glucose-6-phosphate to fructose-6-phosphate. This Vibrio cholerae serotype O1 (strain ATCC 39315 / El Tor Inaba N16961) protein is Glucose-6-phosphate isomerase.